The chain runs to 627 residues: Ras and EF-hand domain-containing protein homolog (627 aa).

A coiled-coil region spans residues 55–245 (YERVIRNFLR…RKLHDSNDGL (191 aa)). Phosphoserine occurs at positions 266 and 272. GTP contacts are provided by residues 438–443 (AVGKSS), 541–544 (NKAD), and 578–579 (AK).

It belongs to the small GTPase superfamily. Rab family. In terms of assembly, homodimer. Interacts with the dynein-dynactin complex.

The protein resides in the cytoplasm. It is found in the perinuclear region. Binds predominantly GDP, and also GTP. Acts as a dynein adapter protein that activates dynein-mediated transport and dynein-dynactin motility on microtubules. This chain is Ras and EF-hand domain-containing protein homolog (Rasef), found in Mus musculus (Mouse).